A 341-amino-acid polypeptide reads, in one-letter code: Phosphate acyltransferase (341 aa).

This sequence belongs to the PlsX family. In terms of assembly, homodimer. Probably interacts with PlsY.

The protein resides in the cytoplasm. It catalyses the reaction a fatty acyl-[ACP] + phosphate = an acyl phosphate + holo-[ACP]. The protein operates within lipid metabolism; phospholipid metabolism. Its function is as follows. Catalyzes the reversible formation of acyl-phosphate (acyl-PO(4)) from acyl-[acyl-carrier-protein] (acyl-ACP). This enzyme utilizes acyl-ACP as fatty acyl donor, but not acyl-CoA. This is Phosphate acyltransferase from Photobacterium profundum (strain SS9).